An 82-amino-acid polypeptide reads, in one-letter code: Small ribosomal subunit protein bS20 (82 aa).

Belongs to the bacterial ribosomal protein bS20 family.

Binds directly to 16S ribosomal RNA. This chain is Small ribosomal subunit protein bS20, found in Streptococcus pyogenes serotype M12 (strain MGAS2096).